A 419-amino-acid chain; its full sequence is Tyrosine--tRNA ligase 2 (419 aa).

Tyr34 is an L-tyrosine binding site. The 'HIGH' region motif lies at 39 to 48 (PTGDSMHIGH). Positions 168 and 172 each coordinate L-tyrosine. The 'KMSKS' region signature appears at 230–234 (KFGKS). Lys233 is an ATP binding site. In terms of domain architecture, S4 RNA-binding spans 352–418 (KNIVEWLVDL…GKKNYSLVKL (67 aa)).

This sequence belongs to the class-I aminoacyl-tRNA synthetase family. TyrS type 1 subfamily. As to quaternary structure, homodimer.

The protein resides in the cytoplasm. It catalyses the reaction tRNA(Tyr) + L-tyrosine + ATP = L-tyrosyl-tRNA(Tyr) + AMP + diphosphate + H(+). Catalyzes the attachment of tyrosine to tRNA(Tyr) in a two-step reaction: tyrosine is first activated by ATP to form Tyr-AMP and then transferred to the acceptor end of tRNA(Tyr). The protein is Tyrosine--tRNA ligase 2 of Bacillus cereus (strain ZK / E33L).